The sequence spans 192 residues: Erythropoietin (192 aa).

The signal sequence occupies residues 1 to 26; the sequence is MGVPERPTLLLLLSLLLLPLGLPVLC. Cys-33 and Cys-187 are joined by a disulfide. 3 N-linked (GlcNAc...) asparagine glycosylation sites follow: Asn-50, Asn-64, and Asn-109.

Belongs to the EPO/TPO family. As to expression, produced by kidney or liver of adult mammals and by liver of fetal or neonatal mammals.

It localises to the secreted. In terms of biological role, hormone involved in the regulation of erythrocyte proliferation and differentiation and the maintenance of a physiological level of circulating erythrocyte mass. Binds to EPOR leading to EPOR dimerization and JAK2 activation thereby activating specific downstream effectors, including STAT1 and STAT3. The sequence is that of Erythropoietin (EPO) from Alexandromys oeconomus (Tundra vole).